Here is a 1249-residue protein sequence, read N- to C-terminus: AMB antimetabolite synthetase AmbB (1249 aa).

Residues 245–633 form an adenylation region; it reads FEAQARRTPQ…LGRLDDQVKF (389 aa). The disordered stretch occupies residues 716–735; that stretch reads IDRKALPRPQATGAEPQALP. One can recognise a Carrier domain in the interval 734–809; that stretch reads LPSDPLEQAL…ALLELLRQAA (76 aa). Ser768 carries the O-(pantetheine 4'-phosphoryl)serine modification. Residues 823–1150 are condensation; it reads GLSLAERRLW…CVTQALRQRG (328 aa).

Belongs to the NRP synthetase family. Pantetheine 4'-phosphate serves as cofactor.

The catalysed reaction is holo-[peptidyl-carrier protein] + L-alanine + ATP = L-alanyl-[peptidyl-carrier protein] + AMP + diphosphate. In terms of biological role, involved in the biosynthesis of the antimetabolite L-2-amino-4-methoxy-trans-3-butenoic acid (AMB), a non-proteinogenic amino acid which is toxic for prokaryotes and eukaryotes. Adenylates L-alanine and loads it onto its peptidyl carrier domain via a thioester linkage to the phosphopanthetheine moiety. In addition, loads activated L-Ala in trans onto the second carrier domain of AmbE. Can also activate L-Ser, Gly and D-Ala, albeit to a lower extent. The condensation domain of AmbB probably condenses the activated L-Ala and the L-Glu loaded on AmbE to form a L-Glu-L-Ala dipeptide at the first carrier domain of AmbE. In Pseudomonas aeruginosa (strain ATCC 15692 / DSM 22644 / CIP 104116 / JCM 14847 / LMG 12228 / 1C / PRS 101 / PAO1), this protein is AMB antimetabolite synthetase AmbB.